A 329-amino-acid chain; its full sequence is Malate dehydrogenase (329 aa).

Position 12 to 18 (12 to 18) interacts with NAD(+); it reads GAAGQIG. Positions 93 and 99 each coordinate substrate. Residues N106, Q113, and 130 to 132 each bind NAD(+); that span reads TGN. Substrate-binding residues include N132 and R163. H188 acts as the Proton acceptor in catalysis.

This sequence belongs to the LDH/MDH superfamily. MDH type 2 family.

The catalysed reaction is (S)-malate + NAD(+) = oxaloacetate + NADH + H(+). Its function is as follows. Catalyzes the reversible oxidation of malate to oxaloacetate. In Mycolicibacterium paratuberculosis (strain ATCC BAA-968 / K-10) (Mycobacterium paratuberculosis), this protein is Malate dehydrogenase.